The primary structure comprises 196 residues: Small ribosomal subunit protein uS4c (196 aa).

The 69-residue stretch at 89–157 (MRLDNILFRL…VQNYIASSDP (69 aa)) folds into the S4 RNA-binding domain.

Belongs to the universal ribosomal protein uS4 family. Part of the 30S ribosomal subunit. Contacts protein S5. The interaction surface between S4 and S5 is involved in control of translational fidelity.

It localises to the plastid. The protein resides in the chloroplast. Functionally, one of the primary rRNA binding proteins, it binds directly to 16S rRNA where it nucleates assembly of the body of the 30S subunit. Its function is as follows. With S5 and S12 plays an important role in translational accuracy. This is Small ribosomal subunit protein uS4c (rps4) from Elymus canadensis (Canada wild rye).